The following is a 1035-amino-acid chain: MSSEKECLENMLNGYAESGRVLSRTSLVINQAVNRSIFTSTVSPAAERIRFILGEEDDSPAPPQLFTELDELLAVDGQEMEWKETARWIKFEEKVEQGGERWSKPHVATLSLHSLFELRTCIEKGTILLDLEATSLPQIVEIVINNQIELGLLKADMKENVTRTLLRKHRHQTKKSNLRSLADIGKTVSSASRLFSTPDNGSPTMTHRNLTSTSLNDVSDKPDKEQLKNKFMKKLPRDAEASNVLVGEVDFLESPFIAFVRLQQAVMLGSLTEVPVPTRFLFILLGPKGKAKSYHEIGRSIATLMSDEVFHDIAYKAKNREDLIAGIDEFLDEVIVLPLGEWDPTIRIEPPKSLPSSDKRKNMYSGGDNLQMNGDAPHDDGGGGHGDSEELQRTGRFCGGLIKDIQRKAPFFASDFYDALSIQSLSAILFIYLGTVTNAITFGGLLGDATENMQGVLESFLGTAVSGAVFCLFGGQPLTILSSTGPVLVFERLLFNFSKDNDFDYLEFRLWIGLWSAFQCLILVATDASFLVKYFTRFTEEGFSSLISFIFIYDAFKKMIKLADYYPINSHFKVDYITQYSCACFPPEPANSSWFNMTTAATTTQFLTNASTDMAYNGTIDWSLLSKKECLKYGGLLVGSNCKYVPDITLMSFILFLGTYTCSMALKKFKTSRYFPTTARKLISDFAIILSILIFCGLDALLGVDTPKLIVPSEFKPTSPNRGWFVPPFGGNPWWVYLAAAIPALLVTILIFMDQQITGVIVNRKEHKLKKGAGYHLDLFWVAILMVVCSFMALPWYVAATVISIAHIDSLKMETETSAPGEQPKFLGVREQRVTGTVVFLLTGLSVFMAPILKFIPMPVLYGVFLYMGVASLNGVQFMDRLKLLLMPPKYQPDFIYLRHVPLRRVHLFTFLQVVCLAMLWILKSTVAAIIFPVMILALVAVRKAMDYFFSQHDLSFLDDVIPEKDKKKKEDEKKKKKKKGSIDSDVEDSDCPYPEKVPSIKIPMDIMEKEPFLIDSKPSDRENSPTFLERHTSC.

Residues 1 to 421 are Cytoplasmic-facing; it reads MSSEKECLEN…FASDFYDALS (421 aa). Residues 192–217 are compositionally biased toward polar residues; the sequence is SRLFSTPDNGSPTMTHRNLTSTSLND. Disordered stretches follow at residues 192–222 and 348–389; these read SRLF…SDKP and IEPP…GDSE. The segment covering 376–389 has biased composition (basic and acidic residues); sequence APHDDGGGGHGDSE. The chain crosses the membrane as a helical span at residues 422 to 446; the sequence is IQSLSAILFIYLGTVTNAITFGGLL. Topologically, residues 447-456 are extracellular; sequence GDATENMQGV. Residues 457–475 traverse the membrane as a helical segment; that stretch reads LESFLGTAVSGAVFCLFGG. A topological domain (cytoplasmic) is located at residue Gln-476. Residues 477-497 traverse the membrane as a discontinuously helical segment; sequence PLTILSSTGPVLVFERLLFNF. The Extracellular portion of the chain corresponds to 498-505; the sequence is SKDNDFDY. Residues 506-526 traverse the membrane as a helical segment; the sequence is LEFRLWIGLWSAFQCLILVAT. At 527-540 the chain is on the cytoplasmic side; that stretch reads DASFLVKYFTRFTE. Residues 541-564 form a helical membrane-spanning segment; the sequence is EGFSSLISFIFIYDAFKKMIKLAD. The Extracellular portion of the chain corresponds to 565 to 648; that stretch reads YYPINSHFKV…GSNCKYVPDI (84 aa). 4 N-linked (GlcNAc...) asparagine glycosylation sites follow: Asn-591, Asn-596, Asn-609, and Asn-617. A helical transmembrane segment spans residues 649–666; the sequence is TLMSFILFLGTYTCSMAL. The Cytoplasmic segment spans residues 667 to 681; it reads KKFKTSRYFPTTARK. Residues 682 to 701 traverse the membrane as a helical segment; that stretch reads LISDFAIILSILIFCGLDAL. The Extracellular portion of the chain corresponds to 702 to 735; sequence LGVDTPKLIVPSEFKPTSPNRGWFVPPFGGNPWW. A helical transmembrane segment spans residues 736–763; the sequence is VYLAAAIPALLVTILIFMDQQITGVIVN. At 764–775 the chain is on the cytoplasmic side; the sequence is RKEHKLKKGAGY. The helical transmembrane segment at 776–792 threads the bilayer; the sequence is HLDLFWVAILMVVCSFM. Residue Ala-793 is a topological domain, extracellular. Residues 794-811 traverse the membrane as a discontinuously helical segment; it reads LPWYVAATVISIAHIDSL. Residues 812–833 lie on the Cytoplasmic side of the membrane; that stretch reads KMETETSAPGEQPKFLGVREQR. A helical transmembrane segment spans residues 834 to 850; sequence VTGTVVFLLTGLSVFMA. Residues 851-857 lie on the Extracellular side of the membrane; the sequence is PILKFIP. Residues 858-874 traverse the membrane as a helical segment; the sequence is MPVLYGVFLYMGVASLN. The Cytoplasmic portion of the chain corresponds to 875–916; that stretch reads GVQFMDRLKLLLMPPKYQPDFIYLRHVPLRRVHLFTFLQVVC. Positions 917 to 942 form an intramembrane region, discontinuously helical; the sequence is LAMLWILKSTVAAIIFPVMILALVAV. The Cytoplasmic segment spans residues 943-1035; sequence RKAMDYFFSQ…PTFLERHTSC (93 aa). Residues 968-1035 form a disordered region; sequence KKKEDEKKKK…PTFLERHTSC (68 aa). Over residues 1007-1035 the composition is skewed to basic and acidic residues; sequence IMEKEPFLIDSKPSDRENSPTFLERHTSC.

The protein belongs to the anion exchanger (TC 2.A.31) family. As to quaternary structure, homodimer. In terms of tissue distribution, expressed in kidney and to a lower extent in bladder, brain, intestine, large intestine and eye.

The protein resides in the basolateral cell membrane. Its subcellular location is the cell membrane. It carries out the reaction 2 hydrogencarbonate(out) + Na(+)(out) = 2 hydrogencarbonate(in) + Na(+)(in). The enzyme catalyses 3 hydrogencarbonate(out) + Na(+)(out) = 3 hydrogencarbonate(in) + Na(+)(in). In terms of biological role, electrogenic sodium/bicarbonate cotransporter with a Na(+):HCO3(-) stoichiometry varying from 1:2 to 1:3. May regulate bicarbonate influx/efflux at the basolateral membrane of cells and regulate intracellular pH. The sequence is that of Electrogenic sodium bicarbonate cotransporter 1 (SLC4A4) from Ambystoma tigrinum (Eastern tiger salamander).